A 503-amino-acid chain; its full sequence is ATP synthase subunit alpha (503 aa).

An ATP-binding site is contributed by 170–177; sequence GDRQTGKT.

In terms of assembly, F-type ATPases have 2 components, CF(1) - the catalytic core - and CF(0) - the membrane proton channel. CF(1) has five subunits: alpha(3), beta(3), gamma(1), delta(1), epsilon(1). CF(0) has four main subunits: a(1), b(1), b'(1) and c(9-12).

It localises to the cellular thylakoid membrane. It catalyses the reaction ATP + H2O + 4 H(+)(in) = ADP + phosphate + 5 H(+)(out). Inhibited by dicyclohexylcarbodiimide. Its function is as follows. Produces ATP from ADP in the presence of a proton gradient across the membrane. The alpha chain is a regulatory subunit. In terms of biological role, the complex from the organism is particularly stable to disruption and remains functional after 6 hrs at 55 degrees Celsius. In Thermosynechococcus vestitus (strain NIES-2133 / IAM M-273 / BP-1), this protein is ATP synthase subunit alpha.